Here is a 217-residue protein sequence, read N- to C-terminus: PRA1 family protein B3 (217 aa).

The segment at 1-24 is disordered; sequence MMANPPTLPISDHSGGGSQSQQPV. The next 5 helical transmembrane spans lie at 76 to 96, 98 to 118, 138 to 158, 162 to 182, and 193 to 213; these read LPYF…LSLL, HPFS…LYLF, LGVL…GSLL, LMIG…EDLF, and LLSF…STPA.

The protein belongs to the PRA1 family. As to quaternary structure, interacts with PRA1B1, PRA1B2, PRA1B4, PRA1B5, PRA1B6 and PRA1E. Expressed in hypocotyls and shoot apex.

The protein localises to the endosome membrane. In terms of biological role, may be involved in both secretory and endocytic intracellular trafficking in the endosomal/prevacuolar compartments. The polypeptide is PRA1 family protein B3 (PRA1B3) (Arabidopsis thaliana (Mouse-ear cress)).